The following is a 256-amino-acid chain: ATP synthase peripheral stalk subunit b, mitochondrial (256 aa).

A mitochondrion-targeting transit peptide spans 1 to 42 (MLSRVVLSAAATAAPCLKNAAALGPGVLQATRAFHTGQPRLA). Lys-131 carries the N6-succinyllysine modification. Residues Lys-139, Lys-154, Lys-162, Lys-221, Lys-225, Lys-233, and Lys-244 each carry the N6-acetyllysine modification.

The protein belongs to the eukaryotic ATPase B chain family. In terms of assembly, component of the ATP synthase complex composed at least of ATP5F1A/subunit alpha, ATP5F1B/subunit beta, ATP5MC1/subunit c (homooctomer), MT-ATP6/subunit a, MT-ATP8/subunit 8, ATP5ME/subunit e, ATP5MF/subunit f, ATP5MG/subunit g, ATP5MK/subunit k, ATP5MJ/subunit j, ATP5F1C/subunit gamma, ATP5F1D/subunit delta, ATP5F1E/subunit epsilon, ATP5PF/subunit F6, ATP5PB/subunit b, ATP5PD/subunit d, ATP5PO/subunit OSCP. ATP synthase complex consists of a soluble F(1) head domain (subunits alpha(3) and beta(3)) - the catalytic core - and a membrane F(0) domain - the membrane proton channel (subunits c, a, 8, e, f, g, k and j). These two domains are linked by a central stalk (subunits gamma, delta, and epsilon) rotating inside the F1 region and a stationary peripheral stalk (subunits F6, b, d, and OSCP).

It localises to the mitochondrion. The protein localises to the mitochondrion inner membrane. In terms of biological role, subunit b, of the mitochondrial membrane ATP synthase complex (F(1)F(0) ATP synthase or Complex V) that produces ATP from ADP in the presence of a proton gradient across the membrane which is generated by electron transport complexes of the respiratory chain. ATP synthase complex consist of a soluble F(1) head domain - the catalytic core - and a membrane F(1) domain - the membrane proton channel. These two domains are linked by a central stalk rotating inside the F(1) region and a stationary peripheral stalk. During catalysis, ATP synthesis in the catalytic domain of F(1) is coupled via a rotary mechanism of the central stalk subunits to proton translocation. In vivo, can only synthesize ATP although its ATP hydrolase activity can be activated artificially in vitro. Part of the complex F(0) domain. Part of the complex F(0) domain and the peripheric stalk, which acts as a stator to hold the catalytic alpha(3)beta(3) subcomplex and subunit a/ATP6 static relative to the rotary elements. The polypeptide is ATP synthase peripheral stalk subunit b, mitochondrial (Mus musculus (Mouse)).